The following is a 202-amino-acid chain: Glycerol-3-phosphate acyltransferase (202 aa).

5 consecutive transmembrane segments (helical) span residues 3 to 23, 87 to 107, 118 to 138, 144 to 164, and 167 to 187; these read NLII…LILA, LLWS…YLLF, GAMI…WVVI, ISSL…FIFN, and LEIH…YKHL.

It belongs to the PlsY family. In terms of assembly, probably interacts with PlsX.

The protein resides in the cell inner membrane. It catalyses the reaction an acyl phosphate + sn-glycerol 3-phosphate = a 1-acyl-sn-glycero-3-phosphate + phosphate. It functions in the pathway lipid metabolism; phospholipid metabolism. Catalyzes the transfer of an acyl group from acyl-phosphate (acyl-PO(4)) to glycerol-3-phosphate (G3P) to form lysophosphatidic acid (LPA). This enzyme utilizes acyl-phosphate as fatty acyl donor, but not acyl-CoA or acyl-ACP. The chain is Glycerol-3-phosphate acyltransferase from Campylobacter jejuni subsp. jejuni serotype O:2 (strain ATCC 700819 / NCTC 11168).